A 904-amino-acid polypeptide reads, in one-letter code: Mdm2-binding protein (904 aa).

The interval 19–38 (ASREAEHGPEVSSGEGTENQ) is disordered. The tract at residues 521–904 (MILRKMDKIK…DWVLEKTSKK (384 aa)) is interaction with MDM2. 4 positions are modified to phosphoserine: serine 597, serine 639, serine 703, and serine 707. Disordered regions lie at residues 754–784 (ESSE…TERS) and 800–830 (PKLA…SQKH). Basic and acidic residues predominate over residues 812 to 830 (SMHESKTSRQIKESRSQKH).

It belongs to the MTBP family. Interacts with MDM2.

Functionally, inhibits cell migration in vitro and suppresses the invasive behavior of tumor cells. May play a role in MDM2-dependent p53/TP53 homeostasis in unstressed cells. Inhibits autoubiquitination of MDM2, thereby enhancing MDM2 stability. This promotes MDM2-mediated ubiquitination of p53/TP53 and its subsequent degradation. In Homo sapiens (Human), this protein is Mdm2-binding protein (MTBP).